A 644-amino-acid polypeptide reads, in one-letter code: Protein FAM149B1 (644 aa).

Disordered regions lie at residues N392 to L490, T551 to R575, and G609 to L644. The segment covering D395–S404 has biased composition (basic and acidic residues). A compositionally biased stretch (polar residues) spans P449 to T459. Polar residues predominate over residues Q626–L644.

It belongs to the FAM149 family.

The sequence is that of Protein FAM149B1 (fam149b1) from Danio rerio (Zebrafish).